Here is a 128-residue protein sequence, read N- to C-terminus: MSKPKRERSLPDNEAKAIARMLRVSPQKLNLVAQLIRGRKASAALADLQFSRKRIAVDVKKCLESAIANAENNHDLDVDALIVSEAHVGKGIVMKRFAPRGRGRSGRIFKPFAQLTIVVRQVEAEASA.

Belongs to the universal ribosomal protein uL22 family. Part of the 50S ribosomal subunit.

This protein binds specifically to 23S rRNA; its binding is stimulated by other ribosomal proteins, e.g. L4, L17, and L20. It is important during the early stages of 50S assembly. It makes multiple contacts with different domains of the 23S rRNA in the assembled 50S subunit and ribosome. In terms of biological role, the globular domain of the protein is located near the polypeptide exit tunnel on the outside of the subunit, while an extended beta-hairpin is found that lines the wall of the exit tunnel in the center of the 70S ribosome. The polypeptide is Large ribosomal subunit protein uL22 (Rhodopseudomonas palustris (strain BisB18)).